Reading from the N-terminus, the 412-residue chain is Multifunctional CCA protein (412 aa).

Positions 8 and 11 each coordinate ATP. Residues G8 and R11 each coordinate CTP. D21 and D23 together coordinate Mg(2+). ATP contacts are provided by R91, R137, and R140. The CTP site is built by R91, R137, and R140. The HD domain occupies 228–329 (TGIHTLMTLS…VKLFDSIDAW (102 aa)).

It belongs to the tRNA nucleotidyltransferase/poly(A) polymerase family. Bacterial CCA-adding enzyme type 1 subfamily. As to quaternary structure, monomer. Can also form homodimers and oligomers. The cofactor is Mg(2+). Ni(2+) serves as cofactor.

The enzyme catalyses a tRNA precursor + 2 CTP + ATP = a tRNA with a 3' CCA end + 3 diphosphate. It catalyses the reaction a tRNA with a 3' CCA end + 2 CTP + ATP = a tRNA with a 3' CCACCA end + 3 diphosphate. Its function is as follows. Catalyzes the addition and repair of the essential 3'-terminal CCA sequence in tRNAs without using a nucleic acid template. Adds these three nucleotides in the order of C, C, and A to the tRNA nucleotide-73, using CTP and ATP as substrates and producing inorganic pyrophosphate. tRNA 3'-terminal CCA addition is required both for tRNA processing and repair. Also involved in tRNA surveillance by mediating tandem CCA addition to generate a CCACCA at the 3' terminus of unstable tRNAs. While stable tRNAs receive only 3'-terminal CCA, unstable tRNAs are marked with CCACCA and rapidly degraded. The sequence is that of Multifunctional CCA protein from Escherichia coli (strain SMS-3-5 / SECEC).